The primary structure comprises 110 residues: Ferredoxin (110 aa).

4Fe-4S ferredoxin-type domains lie at 2–30 (TYIV…YEGE) and 31–60 (FMLV…PESP). The [3Fe-4S] cluster site is built by C9 and C17. [4Fe-4S] cluster contacts are provided by C21, C40, C43, and C46. C50 lines the [3Fe-4S] cluster pocket.

[4Fe-4S] cluster is required as a cofactor. Requires [3Fe-4S] cluster as cofactor.

In terms of biological role, ferredoxins are iron-sulfur proteins that transfer electrons in a wide variety of metabolic reactions. This chain is Ferredoxin (fdxA), found in Rickettsia typhi (strain ATCC VR-144 / Wilmington).